A 115-amino-acid chain; its full sequence is Large ribosomal subunit protein uL24 (115 aa).

It belongs to the universal ribosomal protein uL24 family. Part of the 50S ribosomal subunit.

One of two assembly initiator proteins, it binds directly to the 5'-end of the 23S rRNA, where it nucleates assembly of the 50S subunit. In terms of biological role, one of the proteins that surrounds the polypeptide exit tunnel on the outside of the subunit. This chain is Large ribosomal subunit protein uL24, found in Deinococcus geothermalis (strain DSM 11300 / CIP 105573 / AG-3a).